The primary structure comprises 128 residues: uncharacterized protein (128 aa).

This is an uncharacterized protein from Mycobacterium bovis (strain ATCC BAA-935 / AF2122/97).